Consider the following 113-residue polypeptide: T cell receptor alpha variable 8-4 (113 aa).

An N-terminal signal peptide occupies residues 1–20 (MLLLLVPVLEVIFTLGGTRA). The 93-residue stretch at 21-113 (QSVTQLGSHV…DAAEYFCAVS (93 aa)) folds into the Ig-like domain. An intrachain disulfide couples Cys42 to Cys110. A glycan (N-linked (GlcNAc...) asparagine) is linked at Asn43.

Alpha-beta TR is a heterodimer composed of an alpha and beta chain; disulfide-linked. The alpha-beta TR is associated with the transmembrane signaling CD3 coreceptor proteins to form the TR-CD3 (TcR or TCR). The assembly of alpha-beta TR heterodimers with CD3 occurs in the endoplasmic reticulum where a single alpha-beta TR heterodimer associates with one CD3D-CD3E heterodimer, one CD3G-CD3E heterodimer and one CD247 homodimer forming a stable octameric structure. CD3D-CD3E and CD3G-CD3E heterodimers preferentially associate with TR alpha and TR beta chains, respectively. The association of the CD247 homodimer is the last step of TcR assembly in the endoplasmic reticulum and is required for transport to the cell surface.

It localises to the cell membrane. Its function is as follows. V region of the variable domain of T cell receptor (TR) alpha chain that participates in the antigen recognition. Alpha-beta T cell receptors are antigen specific receptors which are essential to the immune response and are present on the cell surface of T lymphocytes. Recognize peptide-major histocompatibility (MH) (pMH) complexes that are displayed by antigen presenting cells (APC), a prerequisite for efficient T cell adaptive immunity against pathogens. Binding of alpha-beta TR to pMH complex initiates TR-CD3 clustering on the cell surface and intracellular activation of LCK that phosphorylates the ITAM motifs of CD3G, CD3D, CD3E and CD247 enabling the recruitment of ZAP70. In turn ZAP70 phosphorylates LAT, which recruits numerous signaling molecules to form the LAT signalosome. The LAT signalosome propagates signal branching to three major signaling pathways, the calcium, the mitogen-activated protein kinase (MAPK) kinase and the nuclear factor-kappa-B (NF-kB) pathways, leading to the mobilization of transcription factors that are critical for gene expression and essential for T cell growth and differentiation. The T cell repertoire is generated in the thymus, by V-(D)-J rearrangement. This repertoire is then shaped by intrathymic selection events to generate a peripheral T cell pool of self-MH restricted, non-autoaggressive T cells. Post-thymic interaction of alpha-beta TR with the pMH complexes shapes TR structural and functional avidity. This is T cell receptor alpha variable 8-4 from Homo sapiens (Human).